The primary structure comprises 125 residues: Large ribosomal subunit protein bL19 (125 aa).

The protein belongs to the bacterial ribosomal protein bL19 family.

In terms of biological role, this protein is located at the 30S-50S ribosomal subunit interface and may play a role in the structure and function of the aminoacyl-tRNA binding site. The polypeptide is Large ribosomal subunit protein bL19 (Ehrlichia ruminantium (strain Welgevonden)).